The primary structure comprises 185 residues: Ribosome-recycling factor (185 aa).

This sequence belongs to the RRF family.

It localises to the cytoplasm. Functionally, responsible for the release of ribosomes from messenger RNA at the termination of protein biosynthesis. May increase the efficiency of translation by recycling ribosomes from one round of translation to another. The sequence is that of Ribosome-recycling factor from Roseiflexus castenholzii (strain DSM 13941 / HLO8).